We begin with the raw amino-acid sequence, 150 residues long: Cytochrome c oxidase subunit 5A, mitochondrial (150 aa).

The transit peptide at 1-41 directs the protein to the mitochondrion; the sequence is MLGAALRRCAVAAAARAGPRGLLHSAPTPGPAAAIQSVRCY. The short motif at 2–17 is the SIFI-degron element; that stretch reads LGAALRRCAVAAAARA. 2 positions are modified to N6-acetyllysine: K87 and K113. Residue T141 is modified to Phosphothreonine.

It belongs to the cytochrome c oxidase subunit 5A family. As to quaternary structure, component of the cytochrome c oxidase (complex IV, CIV), a multisubunit enzyme composed of 14 subunits. The complex is composed of a catalytic core of 3 subunits MT-CO1, MT-CO2 and MT-CO3, encoded in the mitochondrial DNA, and 11 supernumerary subunits COX4I, COX5A, COX5B, COX6A, COX6B, COX6C, COX7A, COX7B, COX7C, COX8 and NDUFA4, which are encoded in the nuclear genome. The complex exists as a monomer or a dimer and forms supercomplexes (SCs) in the inner mitochondrial membrane with NADH-ubiquinone oxidoreductase (complex I, CI) and ubiquinol-cytochrome c oxidoreductase (cytochrome b-c1 complex, complex III, CIII), resulting in different assemblies (supercomplex SCI(1)III(2)IV(1) and megacomplex MCI(2)III(2)IV(2)). Interacts with AFG1L. Interacts with RAB5IF. In terms of processing, in response to mitochondrial stress, the precursor protein is ubiquitinated by the SIFI complex in the cytoplasm before mitochondrial import, leading to its degradation. Within the SIFI complex, UBR4 initiates ubiquitin chain that are further elongated or branched by KCMF1.

The protein resides in the mitochondrion inner membrane. Its pathway is energy metabolism; oxidative phosphorylation. Its function is as follows. Component of the cytochrome c oxidase, the last enzyme in the mitochondrial electron transport chain which drives oxidative phosphorylation. The respiratory chain contains 3 multisubunit complexes succinate dehydrogenase (complex II, CII), ubiquinol-cytochrome c oxidoreductase (cytochrome b-c1 complex, complex III, CIII) and cytochrome c oxidase (complex IV, CIV), that cooperate to transfer electrons derived from NADH and succinate to molecular oxygen, creating an electrochemical gradient over the inner membrane that drives transmembrane transport and the ATP synthase. Cytochrome c oxidase is the component of the respiratory chain that catalyzes the reduction of oxygen to water. Electrons originating from reduced cytochrome c in the intermembrane space (IMS) are transferred via the dinuclear copper A center (CU(A)) of subunit 2 and heme A of subunit 1 to the active site in subunit 1, a binuclear center (BNC) formed by heme A3 and copper B (CU(B)). The BNC reduces molecular oxygen to 2 water molecules using 4 electrons from cytochrome c in the IMS and 4 protons from the mitochondrial matrix. The polypeptide is Cytochrome c oxidase subunit 5A, mitochondrial (COX5A) (Plecturocebus donacophilus (Bolivian gray titi monkey)).